A 320-amino-acid polypeptide reads, in one-letter code: Serpentine receptor class delta-28 (320 aa).

7 helical membrane-spanning segments follow: residues 5–25, 38–58, 83–103, 122–142, 176–196, 230–250, and 258–278; these read LLHT…MYLA, AIIT…FFVM, ACYI…IWMI, SLVF…ATWI, LTLI…YAWI, FLPS…TQLI, and LVSV…ILFV.

It belongs to the nematode receptor-like protein srd family.

The protein localises to the membrane. This is Serpentine receptor class delta-28 (srd-28) from Caenorhabditis elegans.